We begin with the raw amino-acid sequence, 227 residues long: UPF0173 metal-dependent hydrolase BCAH187_A4741 (227 aa).

The protein belongs to the UPF0173 family.

This chain is UPF0173 metal-dependent hydrolase BCAH187_A4741, found in Bacillus cereus (strain AH187).